A 255-amino-acid polypeptide reads, in one-letter code: Putative glycyl-radical enzyme activating enzyme MJ1632 (255 aa).

Positions 30-245 constitute a Radical SAM core domain; it reads SHISLSDKIT…SNVSCSLDFK (216 aa). Residues cysteine 45, cysteine 49, and cysteine 52 each contribute to the [4Fe-4S] cluster site. Residues 51–53, glycine 88, and 134–136 contribute to the S-adenosyl-L-methionine site; these read YCF and DLK.

It belongs to the organic radical-activating enzymes family. [4Fe-4S] cluster is required as a cofactor.

The catalysed reaction is glycyl-[protein] + reduced [flavodoxin] + S-adenosyl-L-methionine = glycin-2-yl radical-[protein] + semiquinone [flavodoxin] + 5'-deoxyadenosine + L-methionine + H(+). The polypeptide is Putative glycyl-radical enzyme activating enzyme MJ1632 (Methanocaldococcus jannaschii (strain ATCC 43067 / DSM 2661 / JAL-1 / JCM 10045 / NBRC 100440) (Methanococcus jannaschii)).